A 469-amino-acid polypeptide reads, in one-letter code: 3-isopropylmalate dehydratase large subunit (469 aa).

[4Fe-4S] cluster-binding residues include cysteine 347, cysteine 407, and cysteine 410.

It belongs to the aconitase/IPM isomerase family. LeuC type 1 subfamily. Heterodimer of LeuC and LeuD. [4Fe-4S] cluster serves as cofactor.

The catalysed reaction is (2R,3S)-3-isopropylmalate = (2S)-2-isopropylmalate. The protein operates within amino-acid biosynthesis; L-leucine biosynthesis; L-leucine from 3-methyl-2-oxobutanoate: step 2/4. Its function is as follows. Catalyzes the isomerization between 2-isopropylmalate and 3-isopropylmalate, via the formation of 2-isopropylmaleate. This is 3-isopropylmalate dehydratase large subunit from Prochlorococcus marinus subsp. pastoris (strain CCMP1986 / NIES-2087 / MED4).